The primary structure comprises 161 residues: Thy-1 membrane glycoprotein (161 aa).

Residues 1–19 (MNLAISIALLLTVLQVSRG) form the signal peptide. Glutamine 20 carries the post-translational modification Pyrrolidone carboxylic acid. An Ig-like V-type domain is found at 20–126 (QKVTSLTACL…SQNVTVLRDK (107 aa)). Intrachain disulfides connect cysteine 28-cysteine 130 and cysteine 38-cysteine 104. N-linked (GlcNAc...) asparagine glycans are attached at residues asparagine 42 and asparagine 79. At serine 82 the chain carries Phosphoserine. N-linked (GlcNAc...) asparagine glycosylation occurs at asparagine 119. A lipid anchor (GPI-anchor amidated cysteine; alternate) is attached at cysteine 130. Positions 131–161 (EGISLLAQNTSWLLLLLLSLSLLQATDFMSL) are cleaved as a propeptide — removed in mature form. N-linked (GlcNAc...) asparagine glycosylation is present at asparagine 139.

It is found in the cell membrane. Functionally, may play a role in cell-cell or cell-ligand interactions during synaptogenesis and other events in the brain. The sequence is that of Thy-1 membrane glycoprotein (THY1) from Homo sapiens (Human).